A 371-amino-acid chain; its full sequence is Serpentine receptor class delta-1 (371 aa).

Transmembrane regions (helical) follow at residues 31 to 51, 62 to 82, 109 to 129, 148 to 168, 209 to 229, 267 to 287, and 295 to 315; these read LSEV…YVIF, AVLL…SLLA, CFFC…ILLI, MIVI…FYFW, IPSL…YFII, AIPI…FGII, and ITFR…FIFI. The segment at 344–371 is disordered; the sequence is EKFNQPPKQPTNPAQQSANNDAAKTEKV. Polar residues predominate over residues 354-365; sequence TNPAQQSANNDA.

It belongs to the nematode receptor-like protein srd family.

The protein localises to the membrane. The sequence is that of Serpentine receptor class delta-1 (srd-1) from Caenorhabditis elegans.